A 620-amino-acid chain; its full sequence is Aspartic protease 1 (620 aa).

At 1 to 110 (MSPSSRFRNL…LGKAVGLSTS (110 aa)) the chain is on the cytoplasmic side. Positions 1–258 (MSPSSRFRNL…SKKDDGNLSG (258 aa)) are excised as a propeptide. The interval 27 to 31 (YASLL) is important for proper cellular trafficking. Residues 111–131 (VICVVALFGIVCLCLYGLVNF) form a helical; Signal-anchor for type II membrane protein membrane-spanning segment. At 132 to 620 (SFTSVETSPL…KQIGFARLKN (489 aa)) the chain is on the lumenal side. Positions 138-174 (TSPLDDPRNSPVMGELGNPQASTPSSARADTPARHDR) are disordered. Positions 156–165 (PQASTPSSAR) are enriched in polar residues. Residues 275–616 (YYTEIYVGSP…DYDNKQIGFA (342 aa)) enclose the Peptidase A1 domain. Active-site residues include aspartate 293 and aspartate 476. A disulfide bridge connects residues cysteine 513 and cysteine 550.

Belongs to the peptidase A1 family. In terms of processing, proteolytically cleaved into the soluble active mature form by, at least, cysteine protease CPL. Undergoes at least four processing steps; the first cleavage removes the propeptide resulting in the production of a soluble 45 kDa protein, which is further processed into a 35 kDa form followed by an additional processing into the final active 30 kDa form.

Its subcellular location is the membrane. It is found in the vacuole. Aspartyl protease which is dispensable for protein degradation in the vacuolar compartment (VAC) or for tachyzoite and bradyzoite viability. The polypeptide is Aspartic protease 1 (Toxoplasma gondii).